Reading from the N-terminus, the 355-residue chain is Peptide chain release factor 1 (355 aa).

Q233 carries the N5-methylglutamine modification. A compositionally biased stretch (basic and acidic residues) spans 280–293; the sequence is ERRKKEQERADSRR. The disordered stretch occupies residues 280–308; sequence ERRKKEQERADSRRGQVGSGDRSERIRTY.

Belongs to the prokaryotic/mitochondrial release factor family. Post-translationally, methylated by PrmC. Methylation increases the termination efficiency of RF1.

Its subcellular location is the cytoplasm. Its function is as follows. Peptide chain release factor 1 directs the termination of translation in response to the peptide chain termination codons UAG and UAA. This chain is Peptide chain release factor 1, found in Rickettsia peacockii (strain Rustic).